Reading from the N-terminus, the 293-residue chain is Undecaprenyl-diphosphatase (293 aa).

7 helical membrane passes run 57–77, 106–126, 134–154, 172–192, 212–232, 239–259, and 268–288; these read PGVSATAVIQLGSILAVIVYF, LAIAIGTMPILLAGMAIKLFW, IRSLPSIAVVSIVMALLLALA, GFVVGLAQALALIPGVSRSGS, FLLGIPAITLAGLVELKDAFA, VLPLLVGIVSAAFVSWLAIDW, and STWIFVAYRLLFGVLVLAWWL.

This sequence belongs to the UppP family.

It is found in the cell inner membrane. The enzyme catalyses di-trans,octa-cis-undecaprenyl diphosphate + H2O = di-trans,octa-cis-undecaprenyl phosphate + phosphate + H(+). Catalyzes the dephosphorylation of undecaprenyl diphosphate (UPP). Confers resistance to bacitracin. The protein is Undecaprenyl-diphosphatase of Prochlorococcus marinus (strain MIT 9303).